Consider the following 341-residue polypeptide: C2 calcium-dependent domain-containing protein 4D (341 aa).

A compositionally biased stretch (basic and acidic residues) spans 56–71 (RLRDPRGAEGRVDRNP). Disordered regions lie at residues 56 to 75 (RLRDPRGAEGRVDRNPGGRN) and 134 to 176 (CRAP…PYAP). Positions 139-149 (SDTASSPDSSP) are enriched in low complexity. The region spanning 205–331 (RGGQLRLSTE…PPLAGGLGPG (127 aa)) is the C2 domain.

The protein is C2 calcium-dependent domain-containing protein 4D (C2cd4d) of Mus musculus (Mouse).